A 208-amino-acid polypeptide reads, in one-letter code: Superoxide dismutase [Mn] (208 aa).

Histidine 27, histidine 81, aspartate 168, and histidine 172 together coordinate Mn(2+).

Belongs to the iron/manganese superoxide dismutase family. Homodimer. Mn(2+) is required as a cofactor.

The catalysed reaction is 2 superoxide + 2 H(+) = H2O2 + O2. Functionally, destroys superoxide anion radicals which are normally produced within the cells and which are toxic to biological systems. The protein is Superoxide dismutase [Mn] (sodA) of Buchnera aphidicola subsp. Baizongia pistaciae (strain Bp).